A 184-amino-acid chain; its full sequence is Heme transporter hrg-4 (184 aa).

Residues 19–39 (IGWTIFGIVFGISAILTYAIK) traverse the membrane as a helical segment. N-linked (GlcNAc...) asparagine glycosylation is present at Asn42. 3 consecutive transmembrane segments (helical) span residues 46 to 66 (TATTAIATLFACETLYLYWAL), 87 to 107 (VFIGLLGLLGCLVCYIIAGIT), and 124 to 146 (IYFSKFAAMYGENLWFTGSWSLV).

It belongs to the HRG family.

It is found in the cell membrane. Its function is as follows. Heme transporter that mediates heme uptake across the plasma membrane. This Caenorhabditis elegans protein is Heme transporter hrg-4.